A 186-amino-acid chain; its full sequence is Sec-independent protein translocase protein TatB (186 aa).

A helical transmembrane segment spans residues 1–21 (MFDIGFSELILLMVLGLVVLG). Positions 162-186 (LSSYYPPDDIEIAPASKSQSSKTKS) are disordered. The segment covering 177–186 (SKSQSSKTKS) has biased composition (polar residues).

The protein belongs to the TatB family. In terms of assembly, the Tat system comprises two distinct complexes: a TatABC complex, containing multiple copies of TatA, TatB and TatC subunits, and a separate TatA complex, containing only TatA subunits. Substrates initially bind to the TatABC complex, which probably triggers association of the separate TatA complex to form the active translocon.

It is found in the cell inner membrane. Part of the twin-arginine translocation (Tat) system that transports large folded proteins containing a characteristic twin-arginine motif in their signal peptide across membranes. Together with TatC, TatB is part of a receptor directly interacting with Tat signal peptides. TatB may form an oligomeric binding site that transiently accommodates folded Tat precursor proteins before their translocation. This Haemophilus influenzae (strain 86-028NP) protein is Sec-independent protein translocase protein TatB.